A 194-amino-acid polypeptide reads, in one-letter code: Dephospho-CoA kinase (194 aa).

The region spanning 3 to 194 is the DPCK domain; that stretch reads TIGLTGGIGS…EQVDGFWGGL (192 aa). Residue 11–16 participates in ATP binding; that stretch reads GSGKST.

It belongs to the CoaE family.

Its subcellular location is the cytoplasm. The enzyme catalyses 3'-dephospho-CoA + ATP = ADP + CoA + H(+). The protein operates within cofactor biosynthesis; coenzyme A biosynthesis; CoA from (R)-pantothenate: step 5/5. Functionally, catalyzes the phosphorylation of the 3'-hydroxyl group of dephosphocoenzyme A to form coenzyme A. In Corynebacterium jeikeium (strain K411), this protein is Dephospho-CoA kinase.